A 210-amino-acid chain; its full sequence is MADDKSTNEAAAKPVAEKATATALAKKAPAKAAAADKAAPAAKGETVAAKPAKASAKKDVAAPREQVLKVHHLRPAAGAKKEKTRVGRGEGSKGKTAGRGTKGTKARYQVRPGFQGGQLPFHMRTPKLRGFKNPFRVEYQVVNLEKLAELYPAGGDVTVAALVAKGAVRKNEKVKVLGNGDIAVKLNVAVDKVSGSAEQKIVAAGGSVNR.

2 disordered regions span residues 1–64 (MADD…AAPR) and 76–104 (AAGAKKEKTRVGRGEGSKGKTAGRGTKGT). Low complexity predominate over residues 9–54 (EAAAKPVAEKATATALAKKAPAKAAAADKAAPAAKGETVAAKPAKA). Residues 79-93 (AKKEKTRVGRGEGSK) are compositionally biased toward basic and acidic residues.

Belongs to the universal ribosomal protein uL15 family. In terms of assembly, part of the 50S ribosomal subunit.

Its function is as follows. Binds to the 23S rRNA. In Leifsonia xyli subsp. xyli (strain CTCB07), this protein is Large ribosomal subunit protein uL15.